An 85-amino-acid polypeptide reads, in one-letter code: Small ribosomal subunit protein bS18 (85 aa).

The protein belongs to the bacterial ribosomal protein bS18 family. In terms of assembly, part of the 30S ribosomal subunit. Forms a tight heterodimer with protein bS6.

Functionally, binds as a heterodimer with protein bS6 to the central domain of the 16S rRNA, where it helps stabilize the platform of the 30S subunit. The sequence is that of Small ribosomal subunit protein bS18 from Hamiltonella defensa subsp. Acyrthosiphon pisum (strain 5AT).